A 412-amino-acid chain; its full sequence is Trehalose synthase (412 aa).

Belongs to the glycosyltransferase group 1 family. Glycosyltransferase 4 subfamily. In terms of assembly, homodimer. Mg(2+) is required as a cofactor.

The catalysed reaction is an NDP-alpha-D-glucose + D-glucose = alpha,alpha-trehalose + a ribonucleoside 5'-diphosphate + H(+). Its function is as follows. Synthesizes trehalose from ADP-glucose and glucose. Has a much lower activity toward UDP-glucose and GDP-glucose. The reaction is reversible, the equilibrium strongly favors trehalose synthesis. The protein is Trehalose synthase of Pyrococcus furiosus (strain ATCC 43587 / DSM 3638 / JCM 8422 / Vc1).